Reading from the N-terminus, the 765-residue chain is E3 ubiquitin-protein ligase SlrP (765 aa).

Residues 1–451 (MFNITNIQST…VDYQGPRVLF (451 aa)) are interaction with target proteins. LRR repeat units lie at residues 200 to 219 (QITTLILDNNELKSLPENLQ), 221 to 242 (NIKTLYANSNQLTSIPATLPDT), 243 to 262 (IQEMELSINRITELPERLPS), 263 to 284 (ALQSLDLFHNKISCLPENLPEE), 285 to 305 (LRYLSVYDNSIRTLPAHLPSG), 306 to 325 (ITHLNVQSNSLTALPETLPP), 326 to 346 (GLKTLEAGENALTSLPASLPP), 347 to 368 (ELQVLDVSKNQITVLPETLPPT), 369 to 389 (ITTLDVSRNALTNLPENLPAA), and 390 to 410 (LQIMQASRNNLVRLPESLPHF). Positions 452-461 (AMGDFSIVRV) are linker. Positions 462-765 (TRPLHQAVQG…VSSLMSAYWR (304 aa)) are E3 ubiquitin-protein ligase catalytic domain. Positions 464 to 758 (PLHQAVQGWL…NILLKKEVSS (295 aa)) constitute an NEL domain. Cys-546 serves as the catalytic Glycyl thioester intermediate.

Belongs to the LRR-containing bacterial E3 ligase family. Interacts with host TXN. In terms of processing, ubiquitinated in the presence of host E1 ubiquitin-activating enzyme, E2 ubiquitin-conjugating enzyme and ubiquitin.

It localises to the secreted. The protein localises to the host cytoplasm. It carries out the reaction S-ubiquitinyl-[E2 ubiquitin-conjugating enzyme]-L-cysteine + [acceptor protein]-L-lysine = [E2 ubiquitin-conjugating enzyme]-L-cysteine + N(6)-ubiquitinyl-[acceptor protein]-L-lysine.. Binding to TXN is inhibited by hydrogen peroxide in vitro. In terms of biological role, effector proteins function to alter host cell physiology and promote bacterial survival in host tissues. This protein is an E3 ubiquitin ligase that interferes with host's ubiquitination pathway. Can ubiquitinate both ubiquitin and host TXN (thioredoxin). Leads to significant decrease of thioredoxin activity and increase of host cell death. In Salmonella typhimurium (strain LT2 / SGSC1412 / ATCC 700720), this protein is E3 ubiquitin-protein ligase SlrP (slrP).